A 627-amino-acid polypeptide reads, in one-letter code: MASRPGALTEWPWSPLGSFKYLLVAPLVMASMHSYVTAVDEEKDLSRLMIVVLMLWRIVHSQIWISVSRQRTAKGTNKIVDKPIEFEQVDRERTWDDQVIFNTLLMYLANIKLPGASHLPPWRLDGAILMALLHAGPVEFLYYWFHRALHHHFLYSRYHSHHHSSIVTEPITSVVHPFAEHIAYTLLFAIPMVTASLCGILSIVSIMGYITYIDFMNNMGHCNFELFPKRLFHLFPPLKFLCYTPSFHSLHHTQFRTNYSLFMPIYDFIYGTTDNLTDSLYERSLEIEEESPDVIHLTHLTTHNSIYQMRLGFPSLSSCPLWSRPPWYLTCFMWPFTLLCSFALTSAIPLRTFVFERNRLRDLTVHSHLLPKFSFHYKSQRHHESINTIIEEAILEADEKGVKVMSLGLMNNREELNGSGEMYVQKYPKLKIRLVDGSSMAATVVINNIPKEATEIVFRGNLTKVASAVVFALCQKGVKVVVLREEEHSKLIKSGVDKNLVLSTSNSYYSPKVWLVGDGIENEEQMKAKEGTLFVPFSHFPPNKLRKDCFYQSTPAMRVPKSAQNIDSCENWLGRRVMSAWKIGGIVHALEGWEEHDCGNTCNVLRLHAIWEAALRHDFQPLPPSPL.

A run of 5 helical transmembrane segments spans residues 19–39, 48–68, 126–146, 186–206, and 328–348; these read FKYLLVAPLVMASMHSYVTAV, LMIVVLMLWRIVHSQIWISVS, GAILMALLHAGPVEFLYYWFH, LLFAIPMVTASLCGILSIVSI, and YLTCFMWPFTLLCSFALTSAI. The 135-residue stretch at 138 to 272 folds into the Fatty acid hydroxylase domain; sequence VEFLYYWFHR…MPIYDFIYGT (135 aa).

This sequence belongs to the sterol desaturase family. In terms of tissue distribution, expressed in flowers and siliques. Not detected in pollen, pedicels and seeds.

The protein resides in the membrane. The polypeptide is Protein CER1-like 1 (Arabidopsis thaliana (Mouse-ear cress)).